Reading from the N-terminus, the 279-residue chain is Protein phosphatase 1 regulatory subunit 3E (279 aa).

Residues Ser16 and Ser33 each carry the phosphoserine modification. The segment at 28-87 (RSQRPSLEEESEEEPGEGGTRPGARSRAHVPGRGRRARSAPAGGGGARTARSRSPDTRKR) is disordered. Residues 51–65 (ARSRAHVPGRGRRAR) show a composition bias toward basic residues. The residue at position 66 (Ser66) is a Phosphoserine. Residues 87-90 (RVRF) carry the PP1-binding motif motif. Residues 154–259 (AARLQAQRIC…NNGGRDYALL (106 aa)) form the CBM21 domain. The glycogen-binding motif stretch occupies residues 176 to 198 (GSARVLDLAYEKRVSVRWSADGW). Residues 248–256 (WDNNGGRDY) are substrate-binding motif.

In terms of biological role, acts as a glycogen-targeting subunit for PP1. PP1 is involved in glycogen metabolism and contributes to the activation of glycogen synthase leading to an increase in glycogen synthesis. In Mus musculus (Mouse), this protein is Protein phosphatase 1 regulatory subunit 3E (Ppp1r3e).